Here is a 338-residue protein sequence, read N- to C-terminus: Probable tRNA pseudouridine synthase B (338 aa).

Aspartate 78 serves as the catalytic Nucleophile. Positions leucine 245–methionine 320 constitute a PUA domain.

The protein belongs to the pseudouridine synthase TruB family. Type 2 subfamily.

The enzyme catalyses uridine(55) in tRNA = pseudouridine(55) in tRNA. Could be responsible for synthesis of pseudouridine from uracil-55 in the psi GC loop of transfer RNAs. This chain is Probable tRNA pseudouridine synthase B, found in Methanosarcina acetivorans (strain ATCC 35395 / DSM 2834 / JCM 12185 / C2A).